A 559-amino-acid polypeptide reads, in one-letter code: Glucose-6-phosphate isomerase (559 aa).

Catalysis depends on Glu363, which acts as the Proton donor. Active-site residues include His394 and Lys523.

This sequence belongs to the GPI family.

The protein resides in the cytoplasm. It carries out the reaction alpha-D-glucose 6-phosphate = beta-D-fructose 6-phosphate. It functions in the pathway carbohydrate biosynthesis; gluconeogenesis. It participates in carbohydrate degradation; glycolysis; D-glyceraldehyde 3-phosphate and glycerone phosphate from D-glucose: step 2/4. Functionally, catalyzes the reversible isomerization of glucose-6-phosphate to fructose-6-phosphate. This is Glucose-6-phosphate isomerase from Bartonella henselae (strain ATCC 49882 / DSM 28221 / CCUG 30454 / Houston 1) (Rochalimaea henselae).